The following is a 446-amino-acid chain: tRNA-2-methylthio-N(6)-dimethylallyladenosine synthase (446 aa).

Residues 2-122 enclose the MTTase N-terminal domain; the sequence is KKAYVKSYGC…LPDLLRQSRE (121 aa). Residues Cys-11, Cys-47, Cys-85, Cys-157, Cys-161, and Cys-164 each contribute to the [4Fe-4S] cluster site. The Radical SAM core domain maps to 143 to 375; sequence RNRGVTGFLT…QQLLDQQRHA (233 aa). Residues 378 to 440 form the TRAM domain; it reads AAAVGTVAEI…SNSLFGEVLE (63 aa).

It belongs to the methylthiotransferase family. MiaB subfamily. Monomer. It depends on [4Fe-4S] cluster as a cofactor.

Its subcellular location is the cytoplasm. The catalysed reaction is N(6)-dimethylallyladenosine(37) in tRNA + (sulfur carrier)-SH + AH2 + 2 S-adenosyl-L-methionine = 2-methylsulfanyl-N(6)-dimethylallyladenosine(37) in tRNA + (sulfur carrier)-H + 5'-deoxyadenosine + L-methionine + A + S-adenosyl-L-homocysteine + 2 H(+). Functionally, catalyzes the methylthiolation of N6-(dimethylallyl)adenosine (i(6)A), leading to the formation of 2-methylthio-N6-(dimethylallyl)adenosine (ms(2)i(6)A) at position 37 in tRNAs that read codons beginning with uridine. The sequence is that of tRNA-2-methylthio-N(6)-dimethylallyladenosine synthase from Methylorubrum populi (strain ATCC BAA-705 / NCIMB 13946 / BJ001) (Methylobacterium populi).